Consider the following 123-residue polypeptide: Ig heavy chain V region HPCG13 (123 aa).

The Ig-like domain maps to 1 to 114 (EVKLVESGGG…GSYWYFDVWG (114 aa)).

The protein is Ig heavy chain V region HPCG13 of Mus musculus (Mouse).